Reading from the N-terminus, the 244-residue chain is Type III pantothenate kinase (244 aa).

7–14 (DIGNTRLK) contacts ATP. Substrate-binding positions include tyrosine 95 and 102 to 105 (GIDR). The active-site Proton acceptor is the aspartate 104. Threonine 126 serves as a coordination point for ATP. Threonine 177 contacts substrate.

This sequence belongs to the type III pantothenate kinase family. As to quaternary structure, homodimer. It depends on NH4(+) as a cofactor. The cofactor is K(+).

The protein resides in the cytoplasm. The catalysed reaction is (R)-pantothenate + ATP = (R)-4'-phosphopantothenate + ADP + H(+). It functions in the pathway cofactor biosynthesis; coenzyme A biosynthesis; CoA from (R)-pantothenate: step 1/5. Functionally, catalyzes the phosphorylation of pantothenate (Pan), the first step in CoA biosynthesis. This Acinetobacter baumannii (strain ACICU) protein is Type III pantothenate kinase.